Consider the following 208-residue polypeptide: Uracil phosphoribosyltransferase (208 aa).

Residues Arg78, Arg103, and 130 to 138 contribute to the 5-phospho-alpha-D-ribose 1-diphosphate site; that span reads DPMLATGGT. Uracil contacts are provided by residues Ile193 and 198-200; that span reads GDA. Position 199 (Asp199) interacts with 5-phospho-alpha-D-ribose 1-diphosphate.

This sequence belongs to the UPRTase family. It depends on Mg(2+) as a cofactor.

The catalysed reaction is UMP + diphosphate = 5-phospho-alpha-D-ribose 1-diphosphate + uracil. It participates in pyrimidine metabolism; UMP biosynthesis via salvage pathway; UMP from uracil: step 1/1. Its activity is regulated as follows. Allosterically activated by GTP. Its function is as follows. Catalyzes the conversion of uracil and 5-phospho-alpha-D-ribose 1-diphosphate (PRPP) to UMP and diphosphate. The chain is Uracil phosphoribosyltransferase from Nitratidesulfovibrio vulgaris (strain ATCC 29579 / DSM 644 / CCUG 34227 / NCIMB 8303 / VKM B-1760 / Hildenborough) (Desulfovibrio vulgaris).